Consider the following 215-residue polypeptide: Adenylate kinase (215 aa).

Residue 10 to 15 coordinates ATP; it reads GAGKGT. Positions 30 to 59 are NMP; sequence STGDMLRAAIKAGTPLGLEAKKIIDEGGLV. Residues Thr-31, Arg-36, 57 to 59, 85 to 88, and Gln-92 contribute to the AMP site; these read GLV and GFPR. Residues 122 to 159 are LID; that stretch reads GRRVHLASGRTYHVTYNPPKVEGKDDVTGEDLIQRDDD. ATP-binding positions include Arg-123 and 132–133; that span reads TY. Arg-156 and Arg-167 together coordinate AMP. ATP is bound at residue Gln-200.

This sequence belongs to the adenylate kinase family. As to quaternary structure, monomer.

It is found in the cytoplasm. It carries out the reaction AMP + ATP = 2 ADP. It participates in purine metabolism; AMP biosynthesis via salvage pathway; AMP from ADP: step 1/1. Its function is as follows. Catalyzes the reversible transfer of the terminal phosphate group between ATP and AMP. Plays an important role in cellular energy homeostasis and in adenine nucleotide metabolism. The protein is Adenylate kinase of Neisseria meningitidis serogroup C (strain 053442).